Consider the following 203-residue polypeptide: A-type ATP synthase subunit E (203 aa).

Belongs to the V-ATPase E subunit family. In terms of assembly, might form a homodimer. Interacts with subunit H via residues 41-60. The A-type ATPase is composed of subunits A(3), B(3), C, D, E(1 or 2), F, H(2), I and K(x).

Its subcellular location is the cell membrane. Component of the A-type ATP synthase that produces ATP from ADP in the presence of a proton gradient across the membrane. The sequence is that of A-type ATP synthase subunit E from Methanocaldococcus jannaschii (strain ATCC 43067 / DSM 2661 / JAL-1 / JCM 10045 / NBRC 100440) (Methanococcus jannaschii).